A 323-amino-acid polypeptide reads, in one-letter code: tRNA U34 carboxymethyltransferase (323 aa).

Carboxy-S-adenosyl-L-methionine is bound by residues lysine 91, tryptophan 105, lysine 110, glycine 130, 152 to 154, 181 to 182, methionine 196, tyrosine 200, and arginine 315; these read DPT and IE.

This sequence belongs to the class I-like SAM-binding methyltransferase superfamily. CmoB family. Homotetramer.

It catalyses the reaction carboxy-S-adenosyl-L-methionine + 5-hydroxyuridine(34) in tRNA = 5-carboxymethoxyuridine(34) in tRNA + S-adenosyl-L-homocysteine + H(+). Functionally, catalyzes carboxymethyl transfer from carboxy-S-adenosyl-L-methionine (Cx-SAM) to 5-hydroxyuridine (ho5U) to form 5-carboxymethoxyuridine (cmo5U) at position 34 in tRNAs. This Salmonella enteritidis PT4 (strain P125109) protein is tRNA U34 carboxymethyltransferase.